The chain runs to 245 residues: Fumarate reductase iron-sulfur subunit (245 aa).

One can recognise a 2Fe-2S ferredoxin-type domain in the interval 17-98; the sequence is PQSAVNKPHF…NGVITLMPMP (82 aa). [2Fe-2S] cluster contacts are provided by C60, C65, C68, and C80. One can recognise a 4Fe-4S ferredoxin-type domain in the interval 145-174; that stretch reads AQEVFELDRCIECGCCIASCGTKLMRPNFI. The [4Fe-4S] cluster site is built by C154, C157, and C160. Residues C164, C211, and C217 each coordinate [3Fe-4S] cluster. [4Fe-4S] cluster is bound at residue C221.

Belongs to the succinate dehydrogenase/fumarate reductase iron-sulfur protein family. As to quaternary structure, part of an enzyme complex containing three subunits: a flavoprotein (frdA), an iron-sulfur protein (frdB), and diheme cytochrome b (frdC). [2Fe-2S] cluster serves as cofactor. The cofactor is [3Fe-4S] cluster. [4Fe-4S] cluster is required as a cofactor.

It catalyses the reaction a menaquinone + succinate = a menaquinol + fumarate. This Helicobacter pylori (strain J99 / ATCC 700824) (Campylobacter pylori J99) protein is Fumarate reductase iron-sulfur subunit (frdB).